The sequence spans 351 residues: Glycerol-1-phosphate dehydrogenase [NAD(P)+] (351 aa).

NAD(+)-binding positions include 97 to 101 (GKVID) and 119 to 122 (TSPS). Position 124 (Asp-124) interacts with substrate. Position 128 (Ser-128) interacts with NAD(+). Asp-171 serves as a coordination point for substrate. Zn(2+)-binding residues include Asp-171 and His-251. Position 255 (His-255) interacts with substrate. His-267 lines the Zn(2+) pocket.

Belongs to the glycerol-1-phosphate dehydrogenase family. As to quaternary structure, homodimer. The cofactor is Zn(2+).

The protein localises to the cytoplasm. The enzyme catalyses sn-glycerol 1-phosphate + NAD(+) = dihydroxyacetone phosphate + NADH + H(+). The catalysed reaction is sn-glycerol 1-phosphate + NADP(+) = dihydroxyacetone phosphate + NADPH + H(+). The protein operates within membrane lipid metabolism; glycerophospholipid metabolism. Catalyzes the NAD(P)H-dependent reduction of dihydroxyacetonephosphate (DHAP or glycerone phosphate) to glycerol 1-phosphate (G1P). The G1P thus generated is used as the glycerophosphate backbone of phospholipids in the cellular membranes of Archaea. The chain is Glycerol-1-phosphate dehydrogenase [NAD(P)+] from Saccharolobus islandicus (strain Y.N.15.51 / Yellowstone #2) (Sulfolobus islandicus).